A 255-amino-acid chain; its full sequence is Very-long-chain (3R)-3-hydroxyacyl-CoA dehydratase 2 (255 aa).

Residues 3 to 42 are Cytoplasmic-facing; that stretch reads AAAAATAAAKGNGGGGGRAGAGDASGTRKKKGPGPLATAY. The disordered stretch occupies residues 11-34; sequence AKGNGGGGGRAGAGDASGTRKKKG. A compositionally biased stretch (gly residues) spans 13–22; the sequence is GNGGGGGRAG. The chain crosses the membrane as a helical span at residues 43–61; that stretch reads LVIYNVVMTAGWLVIAVGL. Residues 62–80 are Lumenal-facing; sequence VRAYLAKGSYHSLYYSIEK. The chain crosses the membrane as a helical span at residues 81–98; that stretch reads PLKFFQTGALLEILHCAI. Residues 99 to 108 are Cytoplasmic-facing; the sequence is GIVPSSVVLT. The helical transmembrane segment at 109–126 threads the bilayer; sequence SFQVMSRVFLIWAVTHSV. Topologically, residues 127–131 are lumenal; the sequence is KEVQS. A helical membrane pass occupies residues 132-147; it reads EDSVLLFVIAWTITEI. The Cytoplasmic segment spans residues 148-170; that stretch reads IRYSFYTFSLLNHLPYLIKWARY. A helical transmembrane segment spans residues 171–188; the sequence is TLFIVLYPMGVSGELLTI. Residues Y177 and E184 contribute to the active site. At 189–218 the chain is on the lumenal side; that stretch reads YAALPFVRQAGLYSISLPNKYNFSFDYYAF. Positions 199–215 are may be involved in interaction with TECR; that stretch reads GLYSISLPNKYNFSFDY. N210 carries an N-linked (GlcNAc...) asparagine glycan. The chain crosses the membrane as a helical span at residues 219-236; the sequence is LILIMISYIPIFPQLYFH. At 237 to 255 the chain is on the cytoplasmic side; the sequence is MIHQRRKILSHTEEHKKFE.

The protein belongs to the very long-chain fatty acids dehydratase HACD family. May interact with enzymes of the ELO family (including ELOVL1); with those enzymes that mediate condensation, the first of the four steps of the reaction cycle responsible for fatty acids elongation, may be part of a larger fatty acids elongase complex. Interacts with BCAP31. Interacts (via the third lumenal loop) with TECR.

The protein resides in the endoplasmic reticulum membrane. The catalysed reaction is a very-long-chain (3R)-3-hydroxyacyl-CoA = a very-long-chain (2E)-enoyl-CoA + H2O. It catalyses the reaction (3R)-hydroxyhexadecanoyl-CoA = (2E)-hexadecenoyl-CoA + H2O. The enzyme catalyses (3R)-hydroxyoctadecanoyl-CoA = (2E)-octadecenoyl-CoA + H2O. It carries out the reaction (3R)-hydroxyeicosanoyl-CoA = (2E)-eicosenoyl-CoA + H2O. The catalysed reaction is (3R)-hydroxydocosanoyl-CoA = (2E)-docosenoyl-CoA + H2O. It catalyses the reaction (3R)-hydroxytetracosanoyl-CoA = (2E)-tetracosenoyl-CoA + H2O. The enzyme catalyses (3R)-hydroxyhexacosanoyl-CoA = (2E)-hexacosenoyl-CoA + H2O. It participates in lipid metabolism; fatty acid biosynthesis. In terms of biological role, catalyzes the third of the very long-chain fatty acids (VLCFA) elongation four-step cycle (condensation, reduction, dehydration, and reduction). This endoplasmic reticulum-elongation process is characterized by the addition of two carbons to the lipid chain through each cycle. This enzyme catalyzes the dehydration of the 3-hydroxyacyl-CoA intermediate into trans-2,3-enoyl-CoA, within each cycle of elongation. Therefore, it participates in the production of various VLCFAs involved in multiple biological processes as precursors of membrane lipids and lipid mediators. The protein is Very-long-chain (3R)-3-hydroxyacyl-CoA dehydratase 2 of Pongo abelii (Sumatran orangutan).